An 894-amino-acid polypeptide reads, in one-letter code: Valine--tRNA ligase (894 aa).

The segment covering 1 to 22 (MKSIQTPSKSHTNTKETPVMSQ) has biased composition (polar residues). Residues 1 to 28 (MKSIQTPSKSHTNTKETPVMSQEETKGY) are disordered. The short motif at 69–79 (PNVTGSLHIGH) is the 'HIGH' region element. The 'KMSKS' region motif lies at 554-558 (KMSKS). Lysine 557 lines the ATP pocket. Residues 832-894 (IISRLEKQQE…VKVELQGIKG (63 aa)) adopt a coiled-coil conformation.

The protein belongs to the class-I aminoacyl-tRNA synthetase family. ValS type 1 subfamily. As to quaternary structure, monomer.

The protein resides in the cytoplasm. It catalyses the reaction tRNA(Val) + L-valine + ATP = L-valyl-tRNA(Val) + AMP + diphosphate. Functionally, catalyzes the attachment of valine to tRNA(Val). As ValRS can inadvertently accommodate and process structurally similar amino acids such as threonine, to avoid such errors, it has a 'posttransfer' editing activity that hydrolyzes mischarged Thr-tRNA(Val) in a tRNA-dependent manner. The polypeptide is Valine--tRNA ligase (Wolinella succinogenes (strain ATCC 29543 / DSM 1740 / CCUG 13145 / JCM 31913 / LMG 7466 / NCTC 11488 / FDC 602W) (Vibrio succinogenes)).